Consider the following 490-residue polypeptide: ATP synthase subunit beta, chloroplastic (490 aa).

170-177 serves as a coordination point for ATP; it reads GGAGVGKT.

It belongs to the ATPase alpha/beta chains family. F-type ATPases have 2 components, CF(1) - the catalytic core - and CF(0) - the membrane proton channel. CF(1) has five subunits: alpha(3), beta(3), gamma(1), delta(1), epsilon(1). CF(0) has four main subunits: a(1), b(1), b'(1) and c(9-12).

Its subcellular location is the plastid. The protein localises to the chloroplast thylakoid membrane. The enzyme catalyses ATP + H2O + 4 H(+)(in) = ADP + phosphate + 5 H(+)(out). In terms of biological role, produces ATP from ADP in the presence of a proton gradient across the membrane. The catalytic sites are hosted primarily by the beta subunits. This is ATP synthase subunit beta, chloroplastic from Ipomoea aquatica (Water spinach).